The primary structure comprises 502 residues: ATP synthase subunit beta, chloroplastic (502 aa).

Serine 17 is modified (phosphoserine). ATP is bound at residue 176-183; it reads GGAGVGKT.

The protein belongs to the ATPase alpha/beta chains family. F-type ATPases have 2 components, CF(1) - the catalytic core - and CF(0) - the membrane proton channel. CF(1) has five subunits: alpha(3), beta(3), gamma(1), delta(1), epsilon(1). CF(0) has four main subunits: a(1), b(1), b'(1) and c(9-12).

It is found in the plastid. It localises to the chloroplast thylakoid membrane. It carries out the reaction ATP + H2O + 4 H(+)(in) = ADP + phosphate + 5 H(+)(out). Its function is as follows. Produces ATP from ADP in the presence of a proton gradient across the membrane. The catalytic sites are hosted primarily by the beta subunits. The sequence is that of ATP synthase subunit beta, chloroplastic from Lepidium virginicum (Virginia pepperweed).